A 553-amino-acid chain; its full sequence is Protein DA1-related 1 (553 aa).

Residues 10 to 41 (GSSHKFSDGQCNGRYREDRNLEGPRYSAEGSD) are disordered. In terms of domain architecture, UIM 1 spans 42–61 (FDKEEIECAIALSLSEQEHV). Residues 62–77 (IPQDDKGKKIIEYKSE) show a composition bias toward basic and acidic residues. Positions 62–91 (IPQDDKGKKIIEYKSETEEDDDDDEDEDEE) are disordered. The span at 78-91 (TEEDDDDDEDEDEE) shows a compositional bias: acidic residues. Residues 87–106 (DEDEEYMRAQLEAAEEEERR) enclose the UIM 2 domain. Residues 122 to 141 (AQLEETEKLLAKARLEEEEM) enclose the UIM 3; degenerate domain. The UIM 4 domain maps to 149-168 (EEDELLAKALQESMNVGSPP). The residue at position 166 (S166) is a Phosphoserine. The 61-residue stretch at 188–248 (RICVGCQAEI…KLCYKEQHHP (61 aa)) folds into the LIM zinc-binding domain.

Interacts with ubiquitin, TCP14 and TCP15. Polyubiquitinated by DA2.

Functionally, acts redundantly with DA1 and DAR2 to regulate endoreduplication during leaf development. Together with DA1 and DAR2, modulates the protein stability of the transcription factors TCP14 and TCP15, which repress endoreduplication by directly regulating the expression of cell-cycle genes. In Arabidopsis thaliana (Mouse-ear cress), this protein is Protein DA1-related 1.